A 37-amino-acid polypeptide reads, in one-letter code: Large ribosomal subunit protein bL36B (37 aa).

This sequence belongs to the bacterial ribosomal protein bL36 family.

This is Large ribosomal subunit protein bL36B from Paenarthrobacter aurescens (strain TC1).